We begin with the raw amino-acid sequence, 636 residues long: Methionine--tRNA ligase (636 aa).

Residues 12–22 (YYVNGDPHVGS) carry the 'HIGH' region motif. Zn(2+)-binding residues include Cys127, Cys130, Cys145, and Cys148. Positions 298–302 (KMSKS) match the 'KMSKS' region motif. Lys301 lines the ATP pocket. Positions 535–636 (EFNKIEIKVV…KTVEAGAIVS (102 aa)) constitute a tRNA-binding domain.

The protein belongs to the class-I aminoacyl-tRNA synthetase family. MetG type 2A subfamily. As to quaternary structure, homodimer. Zn(2+) is required as a cofactor.

Its subcellular location is the cytoplasm. It carries out the reaction tRNA(Met) + L-methionine + ATP = L-methionyl-tRNA(Met) + AMP + diphosphate. In terms of biological role, is required not only for elongation of protein synthesis but also for the initiation of all mRNA translation through initiator tRNA(fMet) aminoacylation. This Fusobacterium nucleatum subsp. nucleatum (strain ATCC 25586 / DSM 15643 / BCRC 10681 / CIP 101130 / JCM 8532 / KCTC 2640 / LMG 13131 / VPI 4355) protein is Methionine--tRNA ligase (metG).